The chain runs to 425 residues: Serine--tRNA ligase (425 aa).

233-235 (TAE) contributes to the L-serine binding site. ATP is bound at residue 264–266 (RAE). Glutamate 287 is a binding site for L-serine. ATP is bound at residue 351-354 (EISS). Serine 387 lines the L-serine pocket.

The protein belongs to the class-II aminoacyl-tRNA synthetase family. Type-1 seryl-tRNA synthetase subfamily. In terms of assembly, homodimer. The tRNA molecule binds across the dimer.

It is found in the cytoplasm. The enzyme catalyses tRNA(Ser) + L-serine + ATP = L-seryl-tRNA(Ser) + AMP + diphosphate + H(+). The catalysed reaction is tRNA(Sec) + L-serine + ATP = L-seryl-tRNA(Sec) + AMP + diphosphate + H(+). It participates in aminoacyl-tRNA biosynthesis; selenocysteinyl-tRNA(Sec) biosynthesis; L-seryl-tRNA(Sec) from L-serine and tRNA(Sec): step 1/1. Its function is as follows. Catalyzes the attachment of serine to tRNA(Ser). Is also able to aminoacylate tRNA(Sec) with serine, to form the misacylated tRNA L-seryl-tRNA(Sec), which will be further converted into selenocysteinyl-tRNA(Sec). The chain is Serine--tRNA ligase from Clostridium perfringens (strain 13 / Type A).